The sequence spans 287 residues: tRNA N(3)-cytidine methyltransferase METTL6 (287 aa).

Positions 45, 49, 87, 110, 136, 137, and 157 each coordinate S-adenosyl-L-methionine. The segment at 267–287 is disordered; that stretch reads RKPPKDPAPTTDSASLLRKEF.

Belongs to the methyltransferase superfamily. METL family. As to quaternary structure, monomer. Interacts with SARS1/SerRS; interaction is mediated via tRNA(Ser) and is required for N(3)-methylcytidine methylation.

It is found in the cytoplasm. Its subcellular location is the nucleus. It carries out the reaction cytidine(32) in tRNA(Ser) + S-adenosyl-L-methionine = N(3)-methylcytidine(32) in tRNA(Ser) + S-adenosyl-L-homocysteine + H(+). Functionally, S-adenosyl-L-methionine-dependent methyltransferase that mediates N(3)-methylcytidine modification of residue 32 of the tRNA anticodon loop of tRNA(Ser), including tRNA(Ser)(UGA) and tRNA(Ser)(GCU). Interaction with SARS1/SerRS is required for N(3)-methylcytidine methylation. The protein is tRNA N(3)-cytidine methyltransferase METTL6 (Mettl6) of Rattus norvegicus (Rat).